The sequence spans 886 residues: DNA mismatch repair protein MutS (886 aa).

Position 641–648 (641–648 (GPNMAGKS)) interacts with ATP.

This sequence belongs to the DNA mismatch repair MutS family.

In terms of biological role, this protein is involved in the repair of mismatches in DNA. It is possible that it carries out the mismatch recognition step. This protein has a weak ATPase activity. This Rickettsia felis (strain ATCC VR-1525 / URRWXCal2) (Rickettsia azadi) protein is DNA mismatch repair protein MutS.